A 143-amino-acid polypeptide reads, in one-letter code: Sarcoplasmic/endoplasmic reticulum calcium ATPase (143 aa).

This sequence belongs to the cation transport ATPase (P-type) (TC 3.A.3) family. Type IIA subfamily.

It is found in the endoplasmic reticulum membrane. The protein resides in the sarcoplasmic reticulum membrane. It catalyses the reaction Ca(2+)(in) + ATP + H2O = Ca(2+)(out) + ADP + phosphate + H(+). This magnesium-dependent enzyme catalyzes the hydrolysis of ATP coupled with the transport of calcium. Transports calcium ions from the cytosol into the sarcoplasmic/endoplasmic reticulum lumen. Contributes to calcium sequestration involved in muscular excitation/contraction. This Chionoecetes opilio (Atlantic snow crab) protein is Sarcoplasmic/endoplasmic reticulum calcium ATPase.